Here is an 883-residue protein sequence, read N- to C-terminus: DNA topoisomerase 1 (883 aa).

Residues 2 to 126 enclose the Toprim domain; it reads PKLVIVESPT…TKRMVFHEIT (125 aa). The Mg(2+) site is built by glutamate 8 and aspartate 95. The 443-residue stretch at 141 to 583 folds into the Topo IA-type catalytic domain; sequence DQRLVHAQET…QFYRGDRGLE (443 aa). Residues 175 to 180 are interaction with DNA; sequence SAGRVQ. Residues 271–294 are disordered; sequence SLEEKPTTRKPAPPFTTSTLQQES. Tyrosine 320 serves as the catalytic O-(5'-phospho-DNA)-tyrosine intermediate. Residues 842-883 form a disordered region; sequence AKAGQAKAKGGRRSTGTPKSGETKARTTKTTKKTTTRRTTSR. Basic residues predominate over residues 867–883; sequence RTTKTTKKTTTRRTTSR.

The protein belongs to the type IA topoisomerase family. As to quaternary structure, monomer. Requires Mg(2+) as cofactor.

It catalyses the reaction ATP-independent breakage of single-stranded DNA, followed by passage and rejoining.. Releases the supercoiling and torsional tension of DNA, which is introduced during the DNA replication and transcription, by transiently cleaving and rejoining one strand of the DNA duplex. Introduces a single-strand break via transesterification at a target site in duplex DNA. The scissile phosphodiester is attacked by the catalytic tyrosine of the enzyme, resulting in the formation of a DNA-(5'-phosphotyrosyl)-enzyme intermediate and the expulsion of a 3'-OH DNA strand. The free DNA strand then undergoes passage around the unbroken strand, thus removing DNA supercoils. Finally, in the religation step, the DNA 3'-OH attacks the covalent intermediate to expel the active-site tyrosine and restore the DNA phosphodiester backbone. This Synechococcus elongatus (strain ATCC 33912 / PCC 7942 / FACHB-805) (Anacystis nidulans R2) protein is DNA topoisomerase 1.